The primary structure comprises 317 residues: Methionyl-tRNA formyltransferase (317 aa).

112–115 serves as a coordination point for (6S)-5,6,7,8-tetrahydrofolate; the sequence is SLLP.

Belongs to the Fmt family.

It carries out the reaction L-methionyl-tRNA(fMet) + (6R)-10-formyltetrahydrofolate = N-formyl-L-methionyl-tRNA(fMet) + (6S)-5,6,7,8-tetrahydrofolate + H(+). In terms of biological role, attaches a formyl group to the free amino group of methionyl-tRNA(fMet). The formyl group appears to play a dual role in the initiator identity of N-formylmethionyl-tRNA by promoting its recognition by IF2 and preventing the misappropriation of this tRNA by the elongation apparatus. In Mycoplasma mycoides subsp. mycoides SC (strain CCUG 32753 / NCTC 10114 / PG1), this protein is Methionyl-tRNA formyltransferase.